The sequence spans 179 residues: Large ribosomal subunit protein uL5 (179 aa).

It belongs to the universal ribosomal protein uL5 family. Part of the 50S ribosomal subunit; part of the 5S rRNA/L5/L18/L25 subcomplex. Contacts the 5S rRNA and the P site tRNA. Forms a bridge to the 30S subunit in the 70S ribosome.

This is one of the proteins that bind and probably mediate the attachment of the 5S RNA into the large ribosomal subunit, where it forms part of the central protuberance. In the 70S ribosome it contacts protein S13 of the 30S subunit (bridge B1b), connecting the 2 subunits; this bridge is implicated in subunit movement. Contacts the P site tRNA; the 5S rRNA and some of its associated proteins might help stabilize positioning of ribosome-bound tRNAs. In Albidiferax ferrireducens (strain ATCC BAA-621 / DSM 15236 / T118) (Rhodoferax ferrireducens), this protein is Large ribosomal subunit protein uL5.